A 211-amino-acid polypeptide reads, in one-letter code: Uracil phosphoribosyltransferase (211 aa).

Residues Arg78, Arg103, and 130-138 each bind 5-phospho-alpha-D-ribose 1-diphosphate; that span reads DPMLATGGT. Residues Ile195 and 200–202 each bind uracil; that span reads GDA. Asp201 lines the 5-phospho-alpha-D-ribose 1-diphosphate pocket.

This sequence belongs to the UPRTase family. The cofactor is Mg(2+).

The enzyme catalyses UMP + diphosphate = 5-phospho-alpha-D-ribose 1-diphosphate + uracil. It functions in the pathway pyrimidine metabolism; UMP biosynthesis via salvage pathway; UMP from uracil: step 1/1. With respect to regulation, allosterically activated by GTP. Functionally, catalyzes the conversion of uracil and 5-phospho-alpha-D-ribose 1-diphosphate (PRPP) to UMP and diphosphate. The polypeptide is Uracil phosphoribosyltransferase (Arthrobacter sp. (strain FB24)).